A 65-amino-acid polypeptide reads, in one-letter code: MKFHLFFFILLFGATILTAKKSYPEYGSLDLRKECKMRRGHCKLQCSEKELRISFCIRPGTHCCM.

An N-terminal signal peptide occupies residues M1–A19. 3 disulfide bridges follow: C35–C63, C42–C56, and C46–C64.

It belongs to the beta-defensin family. In terms of tissue distribution, isoform 2 is epididymis-specific and expressed mainly in the proximal caput.

It localises to the secreted. In terms of biological role, has bactericidal activity. Its function is as follows. Isoform 2 may play a role in the antimicrobial protection of sperm and urogenital tract epithelia. The protein is Beta-defensin 41 of Mus musculus (Mouse).